We begin with the raw amino-acid sequence, 194 residues long: uncharacterized protein (194 aa).

The first 20 residues, 1 to 20 (MLYKFTVLLLIYSYLRNLQA), serve as a signal peptide directing secretion. Residues asparagine 31, asparagine 72, asparagine 133, and asparagine 157 are each glycosylated (N-linked (GlcNAc...) asparagine; by host).

This is an uncharacterized protein from Ostreid herpesvirus 1 (isolate France) (OsHV-1).